The following is a 653-amino-acid chain: Fructose-1,6-bisphosphatase class 3 (653 aa).

The protein belongs to the FBPase class 3 family. The cofactor is Mn(2+).

The enzyme catalyses beta-D-fructose 1,6-bisphosphate + H2O = beta-D-fructose 6-phosphate + phosphate. It functions in the pathway carbohydrate biosynthesis; gluconeogenesis. This is Fructose-1,6-bisphosphatase class 3 from Listeria monocytogenes serovar 1/2a (strain ATCC BAA-679 / EGD-e).